Reading from the N-terminus, the 185-residue chain is uncharacterized protein (185 aa).

The first 29 residues, 1-29 (MKLFSRTSLVALGTAAAITLSGVTAPAFA), serve as a signal peptide directing secretion. Positions 41-66 (KTAEDNTPEAPGASTPLKLEQPGTIT) are disordered.

In terms of processing, glycosylated; by Pmt.

Its subcellular location is the secreted. This is an uncharacterized protein from Corynebacterium glutamicum (strain ATCC 13032 / DSM 20300 / JCM 1318 / BCRC 11384 / CCUG 27702 / LMG 3730 / NBRC 12168 / NCIMB 10025 / NRRL B-2784 / 534).